Consider the following 313-residue polypeptide: Formimidoylglutamase (313 aa).

Positions 130, 155, 157, 159, 241, and 243 each coordinate Mn(2+).

The protein belongs to the arginase family. The cofactor is Mn(2+).

The catalysed reaction is N-formimidoyl-L-glutamate + H2O = formamide + L-glutamate. It functions in the pathway amino-acid degradation; L-histidine degradation into L-glutamate; L-glutamate from N-formimidoyl-L-glutamate (hydrolase route): step 1/1. In terms of biological role, catalyzes the conversion of N-formimidoyl-L-glutamate to L-glutamate and formamide. The sequence is that of Formimidoylglutamase from Citrobacter koseri (strain ATCC BAA-895 / CDC 4225-83 / SGSC4696).